A 2157-amino-acid chain; its full sequence is Polyketide synthase 2 (2157 aa).

The tract at residues 7–244 (FIFGDQTGGF…IPIPIWAPYH (238 aa)) is N-terminal acylcarrier protein transacylase domain (SAT). In terms of domain architecture, Ketosynthase family 3 (KS3) spans 374–807 (DAKIAIIGMS…GGNSALLLED (434 aa)). Active-site for beta-ketoacyl synthase activity residues include Cys-546, His-681, and His-723. The tract at residues 908-1213 (GFVFSGQGAQ…ASLHRKDDGW (306 aa)) is malonyl-CoA:ACP transacylase (MAT) domain. Catalysis depends on Ser-998, which acts as the For acyl/malonyl transferase activity. Residues 1290–1605 (TSSVQKIIQQ…RSLLNKVLPP (316 aa)) form a product template (PT) domain region. An N-terminal hotdog fold region spans residues 1294 to 1428 (QKIIQQTDGP…CLLCFADPNS (135 aa)). In terms of domain architecture, PKS/mFAS DH spans 1294 to 1600 (QKIIQQTDGP…FLGMSRSLLN (307 aa)). His-1327 acts as the Proton acceptor; for dehydratase activity in catalysis. Residues 1455–1600 (TDSLLSKGIV…FLGMSRSLLN (146 aa)) form a C-terminal hotdog fold region. Asp-1514 (proton donor; for dehydratase activity) is an active-site residue. A disordered region spans residues 1629–1653 (AKDTERRPLDIPTRAQRQPNSPPTG). The Carrier 1 domain maps to 1649–1726 (SPPTGTLGRI…ELKEFLGADQ (78 aa)). Ser-1686 is subject to O-(pantetheine 4'-phosphoryl)serine. A disordered region spans residues 1729 to 1765 (DDAVACESSNGQHTPQTSDKGSGTLAAQKPDDDTGSD). A compositionally biased stretch (polar residues) spans 1735–1749 (ESSNGQHTPQTSDKG). The region spanning 1765–1839 (DTTLHRVCAI…SLQKALCGTE (75 aa)) is the Carrier 2 domain. Ser-1799 carries the O-(pantetheine 4'-phosphoryl)serine modification. The thioesterase (TE) domain stretch occupies residues 1875 to 2151 (ASPPHATSIL…MAEMGDLIGE (277 aa)). Ser-1981 serves as the catalytic For thioesterase activity.

Its function is as follows. Polyketide synthase; part of the Pks2 gene cluster that mediates the formation of infectious structures (appressoria), enabling these fungi to kill insects faster. The product of the Pks2 gene cluster is different from the one of Pks1 and has still not been identified. This Metarhizium guizhouense (strain ARSEF 977) protein is Polyketide synthase 2.